The sequence spans 140 residues: ATP synthase epsilon chain (140 aa).

It belongs to the ATPase epsilon chain family. As to quaternary structure, F-type ATPases have 2 components, CF(1) - the catalytic core - and CF(0) - the membrane proton channel. CF(1) has five subunits: alpha(3), beta(3), gamma(1), delta(1), epsilon(1). CF(0) has three main subunits: a, b and c.

It is found in the cell inner membrane. Produces ATP from ADP in the presence of a proton gradient across the membrane. In Colwellia maris, this protein is ATP synthase epsilon chain.